A 925-amino-acid chain; its full sequence is NADH:fumarate oxidoreductase (925 aa).

Residue Thr447 is modified to FMN phosphoryl threonine. FAD-binding residues include Ala492, Glu511, Asn519, Thr520, Ala525, Gly526, and Val633. Position 525 (Ala525) interacts with fumarate. A succinate-binding site is contributed by Ala525. Residues His719, Ser731, and Glu732 each contribute to the succinate site. 2 residues coordinate fumarate: Ser731 and Glu732. Arg756 (proton donor) is an active-site residue. Position 859 (His859) interacts with fumarate. His859 is a succinate binding site. The FAD site is built by His860 and Glu889. Residues Arg899 and Gly902 each contribute to the fumarate site. Residues Arg899 and Gly902 each contribute to the succinate site. Residues Ala904 and Val905 each coordinate FAD.

Belongs to the FAD-dependent oxidoreductase 2 family. FRD/SDH subfamily. As to quaternary structure, monomer. The cofactor is FAD. Requires FMN as cofactor. In terms of processing, is flavinylated on Thr-447 by ApbE2, encoded in a neighboring gene. Flavinylation is essential for catalytic activity.

It is found in the cytoplasm. It carries out the reaction succinate + NAD(+) = fumarate + NADH + H(+). Its function is as follows. Catalyzes the anaerobic reduction of fumarate to succinate. Uses NADH as the inherent electron donor in this process. Is involved in anaerobic fumarate respiration in K.pneumoniae. In Klebsiella pneumoniae (strain 342), this protein is NADH:fumarate oxidoreductase.